A 161-amino-acid chain; its full sequence is uncharacterized protein (161 aa).

2 disordered regions span residues 47–83 (KPAK…NNIN) and 104–137 (RRLQ…SKNY). Residues 50 to 64 (KRNIHGHNNHTRSSN) show a composition bias toward basic residues. Low complexity-rich tracts occupy residues 73-83 (NINHNNNNNIN) and 115-130 (SSSS…TNDN).

This is an uncharacterized protein from Dictyostelium discoideum (Social amoeba).